A 195-amino-acid chain; its full sequence is Nucleoid occlusion factor SlmA (195 aa).

The region spanning 7–67 (TNRRAQILQA…GLIEFIEETL (61 aa)) is the HTH tetR-type domain. A DNA-binding region (H-T-H motif) is located at residues 30 to 49 (TTAKLAEKVGVSEAALYRHF). A coiled-coil region spans residues 109–141 (DALMGEQDRLRARIAKLFERLETQLKQVLRERK).

Belongs to the nucleoid occlusion factor SlmA family. In terms of assembly, homodimer. Interacts with FtsZ.

Its subcellular location is the cytoplasm. The protein resides in the nucleoid. Its function is as follows. Required for nucleoid occlusion (NO) phenomenon, which prevents Z-ring formation and cell division over the nucleoid. Acts as a DNA-associated cell division inhibitor that binds simultaneously chromosomal DNA and FtsZ, and disrupts the assembly of FtsZ polymers. SlmA-DNA-binding sequences (SBS) are dispersed on non-Ter regions of the chromosome, preventing FtsZ polymerization at these regions. In Alteromonas mediterranea (strain DSM 17117 / CIP 110805 / LMG 28347 / Deep ecotype), this protein is Nucleoid occlusion factor SlmA.